Consider the following 354-residue polypeptide: Uroporphyrinogen decarboxylase (354 aa).

Substrate contacts are provided by residues 27-31, aspartate 77, tyrosine 154, threonine 209, and histidine 327; that span reads RQAGR.

It belongs to the uroporphyrinogen decarboxylase family. In terms of assembly, homodimer.

The protein localises to the cytoplasm. It carries out the reaction uroporphyrinogen III + 4 H(+) = coproporphyrinogen III + 4 CO2. Its pathway is porphyrin-containing compound metabolism; protoporphyrin-IX biosynthesis; coproporphyrinogen-III from 5-aminolevulinate: step 4/4. Functionally, catalyzes the decarboxylation of four acetate groups of uroporphyrinogen-III to yield coproporphyrinogen-III. This chain is Uroporphyrinogen decarboxylase, found in Escherichia coli O7:K1 (strain IAI39 / ExPEC).